A 163-amino-acid polypeptide reads, in one-letter code: Transcriptional repressor NrdR (163 aa).

A zinc finger spans residues 3–34 (CPFCAHPEDKVVDSRESKEGESIRRRRECLKC). The 91-residue stretch at 49–139 (YMVVKKDGRR…VYLDFKDVRE (91 aa)) folds into the ATP-cone domain.

Belongs to the NrdR family. Zn(2+) is required as a cofactor.

Functionally, negatively regulates transcription of bacterial ribonucleotide reductase nrd genes and operons by binding to NrdR-boxes. This Koribacter versatilis (strain Ellin345) protein is Transcriptional repressor NrdR.